We begin with the raw amino-acid sequence, 162 residues long: Protein archease (162 aa).

Positions 34, 161, and 162 each coordinate Ca(2+).

Belongs to the archease family. As to quaternary structure, component of the tRNA-splicing ligase complex.

Functionally, component of the tRNA-splicing ligase complex required to facilitate the enzymatic turnover of catalytic subunit RTCB. Together with ddx1, acts by facilitating the guanylylation of RTCB, a key intermediate step in tRNA ligation. The protein is Protein archease of Ictalurus punctatus (Channel catfish).